A 415-amino-acid polypeptide reads, in one-letter code: JmjC domain-containing protein C (415 aa).

Positions 97–140 (NEKNNQSNNNNNNNNNNNNNNNNNNNNNNNNNNNNNNNNNNKPK) are disordered. Low complexity predominate over residues 104 to 137 (NNNNNNNNNNNNNNNNNNNNNNNNNNNNNNNNNN). In terms of domain architecture, JmjC spans 127 to 302 (NNNNNNNNNN…ELLKSNKLWC (176 aa)).

This Dictyostelium discoideum (Social amoeba) protein is JmjC domain-containing protein C (jcdC).